A 508-amino-acid chain; its full sequence is Photosystem II CP47 reaction center protein (508 aa).

The next 6 helical transmembrane spans lie at 21-36 (SVHI…WAGS), 101-115 (IAFS…IWHW), 140-156 (GIHL…FGAF), 203-218 (IAAG…FHLS), 237-252 (VLSS…AFVV), and 457-472 (SFAL…HGAR).

This sequence belongs to the PsbB/PsbC family. PsbB subfamily. PSII is composed of 1 copy each of membrane proteins PsbA, PsbB, PsbC, PsbD, PsbE, PsbF, PsbH, PsbI, PsbJ, PsbK, PsbL, PsbM, PsbT, PsbX, PsbY, PsbZ, Psb30/Ycf12, at least 3 peripheral proteins of the oxygen-evolving complex and a large number of cofactors. It forms dimeric complexes. It depends on Binds multiple chlorophylls. PSII binds additional chlorophylls, carotenoids and specific lipids. as a cofactor.

The protein localises to the plastid membrane. Its function is as follows. One of the components of the core complex of photosystem II (PSII). It binds chlorophyll and helps catalyze the primary light-induced photochemical processes of PSII. PSII is a light-driven water:plastoquinone oxidoreductase, using light energy to abstract electrons from H(2)O, generating O(2) and a proton gradient subsequently used for ATP formation. In Cuscuta reflexa (Southern Asian dodder), this protein is Photosystem II CP47 reaction center protein.